The chain runs to 96 residues: Aspartyl/glutamyl-tRNA(Asn/Gln) amidotransferase subunit C (96 aa).

The protein belongs to the GatC family. Heterotrimer of A, B and C subunits.

It catalyses the reaction L-glutamyl-tRNA(Gln) + L-glutamine + ATP + H2O = L-glutaminyl-tRNA(Gln) + L-glutamate + ADP + phosphate + H(+). The catalysed reaction is L-aspartyl-tRNA(Asn) + L-glutamine + ATP + H2O = L-asparaginyl-tRNA(Asn) + L-glutamate + ADP + phosphate + 2 H(+). Functionally, allows the formation of correctly charged Asn-tRNA(Asn) or Gln-tRNA(Gln) through the transamidation of misacylated Asp-tRNA(Asn) or Glu-tRNA(Gln) in organisms which lack either or both of asparaginyl-tRNA or glutaminyl-tRNA synthetases. The reaction takes place in the presence of glutamine and ATP through an activated phospho-Asp-tRNA(Asn) or phospho-Glu-tRNA(Gln). This chain is Aspartyl/glutamyl-tRNA(Asn/Gln) amidotransferase subunit C, found in Sulfurimonas denitrificans (strain ATCC 33889 / DSM 1251) (Thiomicrospira denitrificans (strain ATCC 33889 / DSM 1251)).